The following is a 198-amino-acid chain: MNLIMGYTYLIPILFASYLIGSIPFSWILVKVFYKRDLRSVGSGNIGATNAFRVNRGISFLVLLLDIFKSVLVILILEKMCAHKSIMYLTGFTVVLGHIFPVWFLFKGGKGIAPTIGVVLSINIKIFFLFIITWAVVFMIFRYSSLSSIISIISSCIYCAVTENFNSSIFYIAMSIIVLIKHRDNVIRMINGTEKKLF.

5 helical membrane-spanning segments follow: residues 10 to 30, 57 to 77, 86 to 106, 118 to 138, and 160 to 180; these read LIPILFASYLIGSIPFSWILV, GISFLVLLLDIFKSVLVILIL, IMYLTGFTVVLGHIFPVWFLF, VVLSINIKIFFLFIITWAVVF, and AVTENFNSSIFYIAMSIIVLI.

The protein belongs to the PlsY family. In terms of assembly, probably interacts with PlsX.

Its subcellular location is the cell inner membrane. The enzyme catalyses an acyl phosphate + sn-glycerol 3-phosphate = a 1-acyl-sn-glycero-3-phosphate + phosphate. It participates in lipid metabolism; phospholipid metabolism. Its function is as follows. Catalyzes the transfer of an acyl group from acyl-phosphate (acyl-PO(4)) to glycerol-3-phosphate (G3P) to form lysophosphatidic acid (LPA). This enzyme utilizes acyl-phosphate as fatty acyl donor, but not acyl-CoA or acyl-ACP. The protein is Glycerol-3-phosphate acyltransferase of Anaplasma marginale (strain St. Maries).